The following is a 296-amino-acid chain: CDP-diacylglycerol--glycerol-3-phosphate 3-phosphatidyltransferase 1, chloroplastic/mitochondrial (296 aa).

A chloroplast and mitochondrion-targeting transit peptide spans 1-39 (MLRSGLASLIVDVNLRRTLRPSPTFSFPAHLSRCIITSR). Positions 62 to 82 (FSSSSSSEQSRPTSSSRNSFS) are enriched in low complexity. Positions 62 to 103 (FSSSSSSEQSRPTSSSRNSFSGHGQLDSDDNSSPPPSQSSSK) are disordered. A run of 5 helical transmembrane segments spans residues 104–124 (VLTL…LLVA), 126–146 (FYVD…AAAI), 164–184 (FGAF…LILL), 189–209 (IQVA…IAII), and 261–281 (VGWL…LSVW).

Belongs to the CDP-alcohol phosphatidyltransferase class-I family. Mn(2+) serves as cofactor.

The protein resides in the plastid. It is found in the chloroplast membrane. Its subcellular location is the mitochondrion membrane. It carries out the reaction a CDP-1,2-diacyl-sn-glycerol + sn-glycerol 3-phosphate = a 1,2-diacyl-sn-glycero-3-phospho-(1'-sn-glycero-3'-phosphate) + CMP + H(+). The protein operates within phospholipid metabolism; phosphatidylglycerol biosynthesis; phosphatidylglycerol from CDP-diacylglycerol: step 1/2. Its function is as follows. Catalyzes the committed step to the synthesis of the acidic phospholipids, including phosphatidylglycerol (PG). Transfers specifically a phosphatidyl group from CDP-diacylglycerol to glycerol-3-phosphate to form phosphatidylglycerophosphate. Cannot catalyze the phosphatidyl group transfer to inositol, serine, choline or phosphatidylglycerol. Possesses high activity with CDP-dipalmitoylglycerol and low activity with CDP-dioleoylglycerol. Essential for chloroplast differentiation and PG accumulation in thylakoids, an essential process for the assembly of antenna-reaction center complexes to optimize energy transfer from antenna pigments, and for subsequent photochemical efficiency of photosystem II (PSII). During cold acclimation (at 5 degrees Celsius), necessary for the photosystem I (PSI) photochemistry, including both reaction center and light-harvesting integrity. But dispensable in mitochondrion, being redundant with PGPS2 for the production of PG and its derivative cardiolipin (CL) in mitochondrial membranes. Together with PGPS2, required for the proper embryo development by providing PG accurate levels. This is CDP-diacylglycerol--glycerol-3-phosphate 3-phosphatidyltransferase 1, chloroplastic/mitochondrial from Arabidopsis thaliana (Mouse-ear cress).